The following is a 491-amino-acid chain: Protein nucleotidyltransferase YdiU (491 aa).

The ATP site is built by Gly94, Gly96, Arg97, Lys117, Asp129, Gly130, Arg180, and Arg187. Asp256 serves as the catalytic Proton acceptor. Residues Asn257 and Asp266 each coordinate Mg(2+). Position 266 (Asp266) interacts with ATP.

This sequence belongs to the SELO family. Mg(2+) serves as cofactor. The cofactor is Mn(2+).

The catalysed reaction is L-seryl-[protein] + ATP = 3-O-(5'-adenylyl)-L-seryl-[protein] + diphosphate. It carries out the reaction L-threonyl-[protein] + ATP = 3-O-(5'-adenylyl)-L-threonyl-[protein] + diphosphate. The enzyme catalyses L-tyrosyl-[protein] + ATP = O-(5'-adenylyl)-L-tyrosyl-[protein] + diphosphate. It catalyses the reaction L-histidyl-[protein] + UTP = N(tele)-(5'-uridylyl)-L-histidyl-[protein] + diphosphate. The catalysed reaction is L-seryl-[protein] + UTP = O-(5'-uridylyl)-L-seryl-[protein] + diphosphate. It carries out the reaction L-tyrosyl-[protein] + UTP = O-(5'-uridylyl)-L-tyrosyl-[protein] + diphosphate. Its function is as follows. Nucleotidyltransferase involved in the post-translational modification of proteins. It can catalyze the addition of adenosine monophosphate (AMP) or uridine monophosphate (UMP) to a protein, resulting in modifications known as AMPylation and UMPylation. This Brevibacillus brevis (strain 47 / JCM 6285 / NBRC 100599) protein is Protein nucleotidyltransferase YdiU.